The chain runs to 568 residues: Protein downstream neighbor of son homolog (568 aa).

Disordered regions lie at residues 28-48 (NKLAARVSNNNNRRPRHQVDE) and 311-355 (MPLK…DDDE). A compositionally biased stretch (polar residues) spans 315–335 (SDNSGNAHDNSFNEESTTTSL).

It belongs to the DONSON family. In terms of tissue distribution, expression peaks during late G1 and S phase (at protein level).

It is found in the nucleus. Its function is as follows. Essential for DNA amplification in the ovary and required for cell proliferation during development. The chain is Protein downstream neighbor of son homolog (hd) from Drosophila melanogaster (Fruit fly).